Consider the following 145-residue polypeptide: Allergen MAG29 (145 aa).

Disordered stretches follow at residues 1-21 (KDDI…DDKQ) and 103-145 (AGGA…EEVD). Gly residues predominate over residues 104–137 (GGAGAGGMPGGFPGGFPGTDGSGGGAAGGDGGKS).

The protein belongs to the heat shock protein 70 family.

The sequence is that of Allergen MAG29 (MAG29) from Dermatophagoides farinae (American house dust mite).